The chain runs to 298 residues: Myoblast determination protein 1 homolog (298 aa).

The segment covering 53 to 73 has biased composition (basic and acidic residues); the sequence is PEEHPHTRAPPREPTEEEHVR. Residues 53–77 are disordered; the sequence is PEEHPHTRAPPREPTEEEHVRAPSG. The 52-residue stretch at 100–151 folds into the bHLH domain; it reads DRRKAATMRERRRLSKVNEAFETLKRCTSTNPNQRLPKVEILRNAIRYIESL. Disordered stretches follow at residues 170-220 and 242-298; these read SGES…GKSS and CPIL…YQVL. Polar residues-rich tracts occupy residues 173–183 and 257–284; these read SDASSPRSNCS and CSPQ…LPQE.

In terms of assembly, efficient DNA binding requires dimerization with another bHLH protein. Seems to form active heterodimers with ITF-2.

It localises to the nucleus. Functionally, acts as a transcriptional activator that promotes transcription of muscle-specific target genes and plays a role in muscle differentiation. Induces fibroblasts to differentiate into myoblasts. Interacts with and is inhibited by the twist protein. This interaction probably involves the basic domains of both proteins. The protein is Myoblast determination protein 1 homolog (MYOD1) of Gallus gallus (Chicken).